The sequence spans 430 residues: Adenylosuccinate synthetase (430 aa).

GTP-binding positions include 12-18 (GDEGKGK) and 40-42 (GHT). Catalysis depends on Asp-13, which acts as the Proton acceptor. Asp-13 and Gly-40 together coordinate Mg(2+). Residues 13–16 (DEGK), 38–41 (NAGH), Thr-128, Arg-142, Gln-223, Thr-238, and Arg-302 contribute to the IMP site. Catalysis depends on His-41, which acts as the Proton donor. Residue 298–304 (TTTGRPR) coordinates substrate. GTP is bound by residues Arg-304, 330-332 (SID), and 412-414 (SVG).

The protein belongs to the adenylosuccinate synthetase family. Homodimer. It depends on Mg(2+) as a cofactor.

The protein resides in the cytoplasm. The catalysed reaction is IMP + L-aspartate + GTP = N(6)-(1,2-dicarboxyethyl)-AMP + GDP + phosphate + 2 H(+). It participates in purine metabolism; AMP biosynthesis via de novo pathway; AMP from IMP: step 1/2. In terms of biological role, plays an important role in the de novo pathway of purine nucleotide biosynthesis. Catalyzes the first committed step in the biosynthesis of AMP from IMP. The sequence is that of Adenylosuccinate synthetase from Streptococcus pyogenes serotype M49 (strain NZ131).